A 284-amino-acid polypeptide reads, in one-letter code: D-tagatose-1,6-bisphosphate aldolase subunit GatY (284 aa).

Asp-82 serves as the catalytic Proton donor. The Zn(2+) site is built by His-83 and His-180. Dihydroxyacetone phosphate is bound at residue Gly-181. His-208 provides a ligand contact to Zn(2+). Dihydroxyacetone phosphate contacts are provided by residues 209 to 211 (GAS) and 230 to 233 (NVAT).

Belongs to the class II fructose-bisphosphate aldolase family. TagBP aldolase GatY subfamily. In terms of assembly, forms a complex with GatZ. Zn(2+) is required as a cofactor.

It catalyses the reaction D-tagatofuranose 1,6-bisphosphate = D-glyceraldehyde 3-phosphate + dihydroxyacetone phosphate. It functions in the pathway carbohydrate metabolism; D-tagatose 6-phosphate degradation; D-glyceraldehyde 3-phosphate and glycerone phosphate from D-tagatose 6-phosphate: step 2/2. Its function is as follows. Catalytic subunit of the tagatose-1,6-bisphosphate aldolase GatYZ, which catalyzes the reversible aldol condensation of dihydroxyacetone phosphate (DHAP or glycerone-phosphate) with glyceraldehyde 3-phosphate (G3P) to produce tagatose 1,6-bisphosphate (TBP). Requires GatZ subunit for full activity and stability. Is involved in the catabolism of galactitol. This Escherichia coli O6:H1 (strain CFT073 / ATCC 700928 / UPEC) protein is D-tagatose-1,6-bisphosphate aldolase subunit GatY.